A 460-amino-acid polypeptide reads, in one-letter code: Phosphoglucosamine mutase (460 aa).

The active-site Phosphoserine intermediate is the S102. 4 residues coordinate Mg(2+): S102, D241, D243, and D245. Residue S102 is modified to Phosphoserine.

Belongs to the phosphohexose mutase family. Mg(2+) is required as a cofactor. Post-translationally, activated by phosphorylation.

It carries out the reaction alpha-D-glucosamine 1-phosphate = D-glucosamine 6-phosphate. Functionally, catalyzes the conversion of glucosamine-6-phosphate to glucosamine-1-phosphate. This is Phosphoglucosamine mutase from Verminephrobacter eiseniae (strain EF01-2).